Here is a 691-residue protein sequence, read N- to C-terminus: Probable E3 ubiquitin-protein ligase RHG1A (691 aa).

Disordered regions lie at residues 71–91 (SLGE…NEQR), 151–235 (GPGT…PRGM), 316–336 (SFVV…GSRT), 349–373 (VGGT…SRSI), and 395–501 (QSSR…MHNR). Residues 80 to 91 (TKDEASSHNEQR) show a composition bias toward basic and acidic residues. Polar residues-rich tracts occupy residues 204–213 (GESSSWTPGS) and 317–328 (FVVSRNPNSTPV). The segment covering 361–370 (RNLHLDETRS) has biased composition (basic and acidic residues). Residues 395-406 (QSSRNVTNGNLN) are compositionally biased toward polar residues. Over residues 407–419 (SASSVSRTGSTTS) the composition is skewed to low complexity. The span at 429-440 (NLAWTSYQNSPH) shows a compositional bias: polar residues. Low complexity predominate over residues 454-465 (RSLLSSLAADAT). An RING-type; atypical zinc finger spans residues 637-678 (CCVCQEEYTEGEDMGTLECGHEFHSQCIKEWLKQKNLCPICK).

As to expression, expressed in stems, flowers, green siliques, cauline leaves, seeds and roots.

The enzyme catalyses S-ubiquitinyl-[E2 ubiquitin-conjugating enzyme]-L-cysteine + [acceptor protein]-L-lysine = [E2 ubiquitin-conjugating enzyme]-L-cysteine + N(6)-ubiquitinyl-[acceptor protein]-L-lysine.. It functions in the pathway protein modification; protein ubiquitination. Its function is as follows. Probable E3 ubiquitin-protein ligase that may possess E3 ubiquitin ligase activity in vitro. The chain is Probable E3 ubiquitin-protein ligase RHG1A from Arabidopsis thaliana (Mouse-ear cress).